The sequence spans 498 residues: ATP synthase subunit beta, chloroplastic (498 aa).

A Phosphothreonine modification is found at T6. Phosphoserine is present on S13. 172 to 179 (GGAGVGKT) is an ATP binding site.

It belongs to the ATPase alpha/beta chains family. F-type ATPases have 2 components, CF(1) - the catalytic core - and CF(0) - the membrane proton channel. CF(1) has five subunits: alpha(3), beta(3), gamma(1), delta(1), epsilon(1). CF(0) has four main subunits: a(1), b(1), b'(1) and c(9-12).

It localises to the plastid. Its subcellular location is the chloroplast thylakoid membrane. The enzyme catalyses ATP + H2O + 4 H(+)(in) = ADP + phosphate + 5 H(+)(out). Its function is as follows. Produces ATP from ADP in the presence of a proton gradient across the membrane. The catalytic sites are hosted primarily by the beta subunits. This is ATP synthase subunit beta, chloroplastic from Draba nemorosa (Woodland whitlowgrass).